The sequence spans 172 residues: Trypsin inhibitor DE-3 (172 aa).

Cystine bridges form between Cys39-Cys83 and Cys132-Cys139.

Belongs to the protease inhibitor I3 (leguminous Kunitz-type inhibitor) family.

Inhibition of trypsin. The sequence is that of Trypsin inhibitor DE-3 from Erythrina latissima (Broad-leaved coral tree).